A 505-amino-acid chain; its full sequence is MVRIMLMHAVRAWRSADDFPCTEHMAYKIAQVAADPVDVDPEVADMVCNRIIDNAAVSAASMVRRPVTVARHQALAHPVRHGAKVFGVEGSYSADWAAWANGVAARELDFHDTFLAADYSHPADNIPPLVAVAQQLGVCGAELIRGLVTAYEIHIDLTRGICLHEHKIDHVAHLGPAVAAGIGTMLRLDQETIYHAIGQALHLTTSTRQSRKGAISSWKAFAPAHAGKVGIEAVDRAMRGEGSPAPIWEGEDGVIAWLLAGPEHTYRVPLPAPGEPKRAILDSYTKQHSAEYQSQAPIDLACRLRERIGDLDQIASIVLHTSHHTHVVIGTGSGDPQKFDPDASRETLDHSLPYIFAVALQDGCWHHERSYAPERARRSDTVALWHKISTVEDPEWTRRYHCADPAKKAFGARAEVTLHSGEVIVDELAVADAHPLGTRPFERKQYVEKFTELADGVVEPVEQQRFLAVVESLADLESGAVGGLNVLVDPRVLDKAPVIPPGIFR.

This sequence belongs to the PrpD family. As to quaternary structure, monomer.

It carries out the reaction (2S,3S)-2-methylcitrate = 2-methyl-cis-aconitate + H2O. It catalyses the reaction citrate = D-threo-isocitrate. It participates in organic acid metabolism; propanoate degradation. It functions in the pathway carbohydrate metabolism; tricarboxylic acid cycle; isocitrate from oxaloacetate: step 1/2. Functionally, involved in the catabolism of short chain fatty acids (SCFA) via the tricarboxylic acid (TCA)(acetyl degradation route) and via the 2-methylcitrate cycle I (propionate degradation route). Catalyzes the dehydration of 2-methylcitrate (2-MC) to yield the cis isomer of 2-methyl-aconitate. Could also catalyze the dehydration of citrate and the hydration of cis-aconitate. In Mycobacterium tuberculosis (strain ATCC 35801 / TMC 107 / Erdman), this protein is 2-methylcitrate dehydratase.